A 160-amino-acid chain; its full sequence is UPF0225 protein CGSHiGG_04185 (160 aa).

Belongs to the UPF0225 family.

The sequence is that of UPF0225 protein CGSHiGG_04185 from Haemophilus influenzae (strain PittGG).